Consider the following 234-residue polypeptide: MTPSEQNIDKEELAKFSDLAQDWWNPAGKMKPLHLINPVRLKYIEQQITLKGKHVLDVGCGGGLLSEALAKHGAIVTGVDMSESLIDVAKNHAEQQQLNINYQCQDIEILTKDAQRFDIITCMELLEHVPDPQRMIKNCAALIKPGGKLFFSTINRNFKAYLYTIVGAEYVFNLLPKGTHDYAQFIRPSELTQWAESGGLRLLDITGIHYHPLKNEFDLSRDVSVNYLACFTHE.

Positions 40, 59, 80, and 123 each coordinate S-adenosyl-L-methionine.

This sequence belongs to the methyltransferase superfamily. UbiG/COQ3 family.

The catalysed reaction is a 3-demethylubiquinol + S-adenosyl-L-methionine = a ubiquinol + S-adenosyl-L-homocysteine + H(+). It catalyses the reaction a 3-(all-trans-polyprenyl)benzene-1,2-diol + S-adenosyl-L-methionine = a 2-methoxy-6-(all-trans-polyprenyl)phenol + S-adenosyl-L-homocysteine + H(+). It functions in the pathway cofactor biosynthesis; ubiquinone biosynthesis. Its function is as follows. O-methyltransferase that catalyzes the 2 O-methylation steps in the ubiquinone biosynthetic pathway. The chain is Ubiquinone biosynthesis O-methyltransferase from Coxiella burnetii (strain CbuK_Q154) (Coxiella burnetii (strain Q154)).